The sequence spans 105 residues: UPF0145 protein HD_1349 (105 aa).

Belongs to the UPF0145 family.

The sequence is that of UPF0145 protein HD_1349 from Haemophilus ducreyi (strain 35000HP / ATCC 700724).